A 262-amino-acid polypeptide reads, in one-letter code: Eukaryotic translation initiation factor 3 subunit G (262 aa).

Residues 182 to 260 (NTCRVTNLPQ…MVLKVEWTRP (79 aa)) enclose the RRM domain.

Belongs to the eIF-3 subunit G family. As to quaternary structure, component of the eukaryotic translation initiation factor 3 (eIF-3) complex.

It is found in the cytoplasm. RNA-binding component of the eukaryotic translation initiation factor 3 (eIF-3) complex, which is involved in protein synthesis of a specialized repertoire of mRNAs and, together with other initiation factors, stimulates binding of mRNA and methionyl-tRNAi to the 40S ribosome. The eIF-3 complex specifically targets and initiates translation of a subset of mRNAs involved in cell proliferation. This subunit can bind 18S rRNA. Binds to GC-rich 5'UTRs in cholinergic motor neurons, thereby may play a role in translational regulation of mRNAs involved in neuropeptide signaling and stress response, including hlh-30 isoform d and ncs-2. This is Eukaryotic translation initiation factor 3 subunit G from Caenorhabditis elegans.